Reading from the N-terminus, the 164-residue chain is Ecotin (164 aa).

A signal peptide spans 1–20 (MKMFVPAVVFAALASASAWA). Residues cysteine 72 and cysteine 109 are joined by a disulfide bond.

The protein belongs to the protease inhibitor I11 (ecotin) family. Homodimer.

It localises to the periplasm. General inhibitor of pancreatic serine proteases: inhibits chymotrypsin, trypsin, elastases, factor X, kallikrein as well as a variety of other proteases. The protein is Ecotin of Salmonella typhi.